A 138-amino-acid polypeptide reads, in one-letter code: Rapid alkalinization factor 23 (138 aa).

A signal peptide spans 1–28 (MRGLSRNSGAAAIFAILLILAVHNWSVA). The propeptide at 29-88 (VSSQSTEFAGDFPPFETECRGTIAECSVSAALGDGGDLFYGGGEMGEEFEMDSEINRRIL) is removed in mature form. Cystine bridges form between Cys-106–Cys-116 and Cys-129–Cys-135.

Belongs to the plant rapid alkalinization factor (RALF) family. In terms of processing, proteolytically cleaved, probably by SBT6.1 (S1P), a subtilisin-like serine protease (subtilase).

The protein localises to the secreted. Functionally, cell signaling peptide that may regulate plant stress, growth, and development. Mediates a rapid alkalinization of extracellular space by mediating a transient increase in the cytoplasmic Ca(2+) concentration leading to a calcium-dependent signaling events through a cell surface receptor and a concomitant activation of some intracellular mitogen-activated protein kinases. Negatively regulates brassinolide (BL)-mediated signaling pathway (e.g. BL-induced hypocotyl elongation and branching limitation). The polypeptide is Rapid alkalinization factor 23 (RALF23) (Arabidopsis thaliana (Mouse-ear cress)).